Reading from the N-terminus, the 416-residue chain is LTYYTPDYQTKDTDILAAFRMTPQPGVPAEEAGAAVAAESSTGTWTTVWTDGLTSLDRYKGRCYDIEPVAGEENQYIAYVAYPLDLFEEGSVTNLFTSIVGNVFGFKALRALRLEDLRIPPAYSKTFIGPPHGIQVERDKLTKYGRPLLGCTIKPKLGLSAKNYGRAVYECLRGGLDFTKDDENVNSQPFMRWRDRFLSVAEALFKAQAETGEIKGHYLNATAGTCEEMMKRAIFARELGAPIVMHDYLTGGFTANTSLAYYCRDNGLLLHIHRAMHAVIDRQRNHGMHFRVLAKALRMSGGDHVHAGTVVGKLEGERDVTLGFVDLLRDDYIEKDRSRGVYFTQDWVSMPGVIPVASGGIHVWHMPALTEIFGDDSVLQFGGGTLGHPWGNAPGAVANRVALEACVQARNEGRDL.

Residues asparagine 102 and threonine 152 each contribute to the substrate site. The active-site Proton acceptor is lysine 154. A substrate-binding site is contributed by lysine 156. The Mg(2+) site is built by lysine 180, aspartate 182, and glutamate 183. Lysine 180 is subject to N6-carboxylysine. Histidine 273 acts as the Proton acceptor in catalysis. Substrate-binding residues include arginine 274, histidine 306, and serine 358.

The protein belongs to the RuBisCO large chain family. Type I subfamily. As to quaternary structure, heterohexadecamer of 8 large chains and 8 small chains; disulfide-linked. The disulfide link is formed within the large subunit homodimers. The cofactor is Mg(2+). Post-translationally, the disulfide bond which can form in the large chain dimeric partners within the hexadecamer appears to be associated with oxidative stress and protein turnover.

Its subcellular location is the plastid. It is found in the chloroplast. It carries out the reaction 2 (2R)-3-phosphoglycerate + 2 H(+) = D-ribulose 1,5-bisphosphate + CO2 + H2O. It catalyses the reaction D-ribulose 1,5-bisphosphate + O2 = 2-phosphoglycolate + (2R)-3-phosphoglycerate + 2 H(+). RuBisCO catalyzes two reactions: the carboxylation of D-ribulose 1,5-bisphosphate, the primary event in carbon dioxide fixation, as well as the oxidative fragmentation of the pentose substrate in the photorespiration process. Both reactions occur simultaneously and in competition at the same active site. This chain is Ribulose bisphosphate carboxylase large chain (rbcL), found in Arthropteris beckleri (Fern).